The sequence spans 456 residues: UDP-N-acetylmuramoylalanine--D-glutamate ligase (456 aa).

ATP is bound at residue 121–127 (GTNGKTT).

It belongs to the MurCDEF family.

It localises to the cytoplasm. The catalysed reaction is UDP-N-acetyl-alpha-D-muramoyl-L-alanine + D-glutamate + ATP = UDP-N-acetyl-alpha-D-muramoyl-L-alanyl-D-glutamate + ADP + phosphate + H(+). It participates in cell wall biogenesis; peptidoglycan biosynthesis. Functionally, cell wall formation. Catalyzes the addition of glutamate to the nucleotide precursor UDP-N-acetylmuramoyl-L-alanine (UMA). In Desulfotalea psychrophila (strain LSv54 / DSM 12343), this protein is UDP-N-acetylmuramoylalanine--D-glutamate ligase.